The chain runs to 240 residues: Protein FANTASTIC FOUR 2 (240 aa).

Disordered stretches follow at residues 89–124 (TTPR…PPIK) and 177–229 (LLSH…KPML). An FAF domain is found at 117 to 171 (NSFPPPIKFVEDSKYNRMVRWLGEDGRIVVQAIRVSSPPSCFVSERGEGRLRLIL). Residues 184–200 (EEEEEETEEGIDEETSE) show a composition bias toward acidic residues. The span at 207–216 (GNKKFSRFSR) shows a compositional bias: basic residues. A compositionally biased stretch (basic and acidic residues) spans 217–226 (RCKENGREPK).

It belongs to the fantastic four family. As to expression, expressed in the shoot apex, stamens, carpels and young siliques. Detected in provascular and vascular tissue, and in the center of the vegetative and inflorescence meristems. Expressed in the funiculus. In roots and leaves, predominantly expressed in phloem.

Regulates the size of the shoot meristem by modulating the CLV3-WUS feedback loop. Can repress WUS but is under negative control by CLV3. The sequence is that of Protein FANTASTIC FOUR 2 (FAF2) from Arabidopsis thaliana (Mouse-ear cress).